We begin with the raw amino-acid sequence, 746 residues long: Chitin biosynthesis protein CHS6 (746 aa).

A disordered region spans residues 1–25 (MNLFWPSETKKQNEIPGGDYTPGNS). The segment at 734-746 (LAWIADLDHTVQP) is CHS5-binding.

The protein belongs to the CHAPS family. As to quaternary structure, component of the CHS5/6 complex composed of the 4 CHAPS proteins BCH1, BCH2, BUD7, and CHS6 as well as at least CHS5 and GTP-bound ARF1. The complex interacts with the cargo protein CHS3.

It localises to the golgi apparatus. Its subcellular location is the trans-Golgi network membrane. In terms of biological role, member of the CHS5-ARF1P-binding proteins (CHAPS) which mediates export of specific cargo proteins, including chitin synthase CHS3. The sequence is that of Chitin biosynthesis protein CHS6 (CHS6) from Saccharomyces cerevisiae (strain ATCC 204508 / S288c) (Baker's yeast).